A 239-amino-acid polypeptide reads, in one-letter code: Ribonuclease PH (239 aa).

Phosphate is bound by residues R86 and 124 to 126 (GTR).

The protein belongs to the RNase PH family. Homohexameric ring arranged as a trimer of dimers.

The enzyme catalyses tRNA(n+1) + phosphate = tRNA(n) + a ribonucleoside 5'-diphosphate. Phosphorolytic 3'-5' exoribonuclease that plays an important role in tRNA 3'-end maturation. Removes nucleotide residues following the 3'-CCA terminus of tRNAs; can also add nucleotides to the ends of RNA molecules by using nucleoside diphosphates as substrates, but this may not be physiologically important. Probably plays a role in initiation of 16S rRNA degradation (leading to ribosome degradation) during starvation. The chain is Ribonuclease PH from Cupriavidus necator (strain ATCC 17699 / DSM 428 / KCTC 22496 / NCIMB 10442 / H16 / Stanier 337) (Ralstonia eutropha).